We begin with the raw amino-acid sequence, 285 residues long: Ribosomal RNA small subunit methyltransferase I (285 aa).

Belongs to the methyltransferase superfamily. RsmI family.

It is found in the cytoplasm. It carries out the reaction cytidine(1402) in 16S rRNA + S-adenosyl-L-methionine = 2'-O-methylcytidine(1402) in 16S rRNA + S-adenosyl-L-homocysteine + H(+). Functionally, catalyzes the 2'-O-methylation of the ribose of cytidine 1402 (C1402) in 16S rRNA. The polypeptide is Ribosomal RNA small subunit methyltransferase I (Buchnera aphidicola subsp. Schizaphis graminum (strain Sg)).